A 926-amino-acid polypeptide reads, in one-letter code: DNA mismatch repair protein MutS (926 aa).

The tract at residues 1-67 (MAASPNPLQG…NPNQINDLDQ (67 aa)) is disordered. 2 stretches are compositionally biased toward polar residues: residues 18 to 44 (QSTT…QLKS) and 57 to 67 (KNPNQINDLDQ). 726–733 (GPNASGKS) contacts ATP.

The protein belongs to the DNA mismatch repair MutS family.

In terms of biological role, this protein is involved in the repair of mismatches in DNA. It is possible that it carries out the mismatch recognition step. This protein has a weak ATPase activity. This Prochlorococcus marinus (strain NATL1A) protein is DNA mismatch repair protein MutS.